Reading from the N-terminus, the 291-residue chain is Small ribosomal subunit protein uS2 (291 aa).

The segment at 256 to 291 (LRGEGTAPAASEEQPAEEPAPAAAEAQTDAAVGTAV) is disordered. Residues 261–291 (TAPAASEEQPAEEPAPAAAEAQTDAAVGTAV) are compositionally biased toward low complexity.

This sequence belongs to the universal ribosomal protein uS2 family.

The protein is Small ribosomal subunit protein uS2 of Frankia alni (strain DSM 45986 / CECT 9034 / ACN14a).